Consider the following 277-residue polypeptide: Coiled-coil domain-containing protein 117 (277 aa).

Residues 22 to 69 (SPPAFAGRAFPPGAAGHDLAPRPGVRGPPSSPDGRTARGRVSIHCRKK) are disordered. Residues 23-55 (PPAFAGRAFPPGAAGHDLAPRPGVRGPPSSPDG) are compositionally biased toward low complexity. Omega-N-methylarginine is present on R47. S52 bears the Phosphoserine mark. Positions 58–69 (ARGRVSIHCRKK) are enriched in basic residues. A coiled-coil region spans residues 139-166 (QCEVARRRLQEIEDRIIDEDEEVESDRN). 2 disordered regions span residues 216-242 (LSEKPKPSSNPKNYMGESQTKHTATGT) and 255-277 (QCTDTPLYHSLETAASTEEEMEL). Residues 225–242 (NPKNYMGESQTKHTATGT) are compositionally biased toward polar residues.

In terms of assembly, interacts with CIAO2B; the interaction is direct. Interacts with MMS19; the interaction is indirect.

It is found in the cytoplasm. The protein localises to the cytoskeleton. It localises to the spindle. The protein resides in the nucleus. In terms of biological role, facilitates DNA repair, cell cycle progression, and cell proliferation through its interaction with CIAO2B. This chain is Coiled-coil domain-containing protein 117, found in Rattus norvegicus (Rat).